We begin with the raw amino-acid sequence, 178 residues long: Large ribosomal subunit protein uL13m (178 aa).

At serine 2 the chain carries N-acetylserine.

Belongs to the universal ribosomal protein uL13 family. In terms of assembly, component of the mitochondrial large ribosomal subunit (mt-LSU). Mature mammalian 55S mitochondrial ribosomes consist of a small (28S) and a large (39S) subunit. The 28S small subunit contains a 12S ribosomal RNA (12S mt-rRNA) and 30 different proteins. The 39S large subunit contains a 16S rRNA (16S mt-rRNA), a copy of mitochondrial valine transfer RNA (mt-tRNA(Val)), which plays an integral structural role, and 52 different proteins. Interacts with OXA1L.

It is found in the mitochondrion. The protein is Large ribosomal subunit protein uL13m (MRPL13) of Homo sapiens (Human).